Consider the following 391-residue polypeptide: NADH-quinone oxidoreductase subunit D (391 aa).

Belongs to the complex I 49 kDa subunit family. NDH-1 is composed of 14 different subunits. Subunits NuoB, C, D, E, F, and G constitute the peripheral sector of the complex.

The protein localises to the cell inner membrane. It catalyses the reaction a quinone + NADH + 5 H(+)(in) = a quinol + NAD(+) + 4 H(+)(out). Its function is as follows. NDH-1 shuttles electrons from NADH, via FMN and iron-sulfur (Fe-S) centers, to quinones in the respiratory chain. The immediate electron acceptor for the enzyme in this species is believed to be ubiquinone. Couples the redox reaction to proton translocation (for every two electrons transferred, four hydrogen ions are translocated across the cytoplasmic membrane), and thus conserves the redox energy in a proton gradient. In Pelagibacter ubique (strain HTCC1062), this protein is NADH-quinone oxidoreductase subunit D.